The primary structure comprises 549 residues: Glucose-6-phosphate isomerase (549 aa).

Glu-355 functions as the Proton donor in the catalytic mechanism. Catalysis depends on residues His-386 and Lys-514.

It belongs to the GPI family.

Its subcellular location is the cytoplasm. It carries out the reaction alpha-D-glucose 6-phosphate = beta-D-fructose 6-phosphate. It functions in the pathway carbohydrate biosynthesis; gluconeogenesis. It participates in carbohydrate degradation; glycolysis; D-glyceraldehyde 3-phosphate and glycerone phosphate from D-glucose: step 2/4. In terms of biological role, catalyzes the reversible isomerization of glucose-6-phosphate to fructose-6-phosphate. The chain is Glucose-6-phosphate isomerase from Salmonella paratyphi C (strain RKS4594).